A 178-amino-acid polypeptide reads, in one-letter code: Inner membrane-spanning protein YciB (178 aa).

Transmembrane regions (helical) follow at residues 1–21, 23–43, 51–71, 77–97, 120–140, and 150–170; these read MKIL…KMTG, IIIA…FTWF, MHLV…LLGD, WKPT…QFIG, LNLA…YVAF, and FKLF…GIYL.

The protein belongs to the YciB family.

The protein localises to the cell inner membrane. Functionally, plays a role in cell envelope biogenesis, maintenance of cell envelope integrity and membrane homeostasis. The chain is Inner membrane-spanning protein YciB from Marinomonas sp. (strain MWYL1).